Reading from the N-terminus, the 126-residue chain is Aspartate 1-decarboxylase (126 aa).

Residue Ser25 is the Schiff-base intermediate with substrate; via pyruvic acid of the active site. Ser25 bears the Pyruvic acid (Ser) mark. Residue Thr57 participates in substrate binding. Catalysis depends on Tyr58, which acts as the Proton donor. 73 to 75 serves as a coordination point for substrate; the sequence is GGA.

It belongs to the PanD family. In terms of assembly, heterooctamer of four alpha and four beta subunits. Pyruvate serves as cofactor. Post-translationally, is synthesized initially as an inactive proenzyme, which is activated by self-cleavage at a specific serine bond to produce a beta-subunit with a hydroxyl group at its C-terminus and an alpha-subunit with a pyruvoyl group at its N-terminus.

It is found in the cytoplasm. The catalysed reaction is L-aspartate + H(+) = beta-alanine + CO2. The protein operates within cofactor biosynthesis; (R)-pantothenate biosynthesis; beta-alanine from L-aspartate: step 1/1. Functionally, catalyzes the pyruvoyl-dependent decarboxylation of aspartate to produce beta-alanine. The chain is Aspartate 1-decarboxylase from Xanthomonas axonopodis pv. citri (strain 306).